Reading from the N-terminus, the 1272-residue chain is AF4/FMR2 family member 2 (1272 aa).

Disordered stretches follow at residues 93–183 and 200–223; these read IPKN…LTQD and PQIG…SSGE. The span at 97–107 shows a compositional bias: polar residues; sequence SVPQNPNNKNE. Positions 151 to 160 are enriched in basic and acidic residues; the sequence is SKPEWSRDSH. Positions 161-183 are enriched in polar residues; it reads NPSTVLASQASGQPNKMQTLTQD. A compositionally biased stretch (basic and acidic residues) spans 212–223; it reads AKEDSNPKSSGE. A Phosphoserine modification is found at Ser-391. Disordered regions lie at residues 418 to 491, 535 to 687, 779 to 829, and 842 to 903; these read KAKP…KWQL, TNAS…DQEE, SLHA…PEKK, and PPCI…QDKN. Positions 426–438 are enriched in pro residues; it reads VNPPLATPQPPPA. Residues 439-452 are compositionally biased toward low complexity; it reads VQASGGSGSSSESE. Thr-478 is modified (phosphothreonine). The segment covering 543–558 has biased composition (basic and acidic residues); that stretch reads EPKERPLLSLIREKAR. Positions 576–586 are enriched in polar residues; that stretch reads STTSETVSQRT. Positions 616 to 629 are enriched in basic and acidic residues; sequence PKEKESVELHDPPR. A compositionally biased stretch (basic residues) spans 630-640; the sequence is GRNKATAHKPA. The segment covering 818–829 has biased composition (basic and acidic residues); it reads PTEVAEKIPEKK. Composition is skewed to pro residues over residues 844-853 and 874-883; these read CISPAPPHKP and FPPPLSPLPE.

This sequence belongs to the AF4 family.

It is found in the nucleus speckle. In terms of biological role, RNA-binding protein. Might be involved in alternative splicing regulation through an interaction with G-quartet RNA structure. The sequence is that of AF4/FMR2 family member 2 (AFF2) from Pongo pygmaeus (Bornean orangutan).